Reading from the N-terminus, the 334-residue chain is uncharacterized protein (334 aa).

A substrate-binding site is contributed by serine 126. The Proton acceptor role is filled by tyrosine 151.

It belongs to the NAD(P)-dependent epimerase/dehydratase family. dTDP-glucose dehydratase subfamily.

This is an uncharacterized protein from Escherichia coli O111:H-.